A 224-amino-acid chain; its full sequence is Ribonuclease HII (224 aa).

In terms of domain architecture, RNase H type-2 spans 1-210; it reads MKLGGIDEAG…LKKIEEKLQK (210 aa). The a divalent metal cation site is built by Asp-7, Glu-8, and Asp-105.

It belongs to the RNase HII family. It depends on Mn(2+) as a cofactor. Mg(2+) is required as a cofactor.

It is found in the cytoplasm. It carries out the reaction Endonucleolytic cleavage to 5'-phosphomonoester.. Its function is as follows. Endonuclease that specifically degrades the RNA of RNA-DNA hybrids. The chain is Ribonuclease HII from Thermococcus sibiricus (strain DSM 12597 / MM 739).